Reading from the N-terminus, the 320-residue chain is MNKNLEANRNRTLSEGIHKNIKVRAPKIDKTAISPYDRYCDGYGMPGAYGNGYVSVLKVSVGTVKKTDDILLDGIVSYDRAEINDAYVGQINMLTASSFCGVAGQVWGHDLATHDSIANDEIKPLYELKQFDGTPLKVYDAKPLLEAGIELFGTEKNRRFTTAPGAHVICANKSATAYRPKENRPLKEGEAYGVWSFIALSLSNDRDHCADLFIEDAGLWTKNDNPEDLKKFLEDHRKAVTWSVVECGRDSHVVFERTYIGFAYVIMKPGEIGNALTCAPYVTLARDAVPSEGFPSLNRISLSQWLDDMNFDSLVNPSKK.

A propeptide spanning residues 2-11 is cleaved from the precursor; sequence NKNLEANRNR. Serine 98 bears the Pyruvic acid (Ser) mark. The active-site Proton donor is glutamate 215.

In terms of assembly, the proenzyme is a hexamer of identical pi chains; each pi chain monomer is cleaved to form a small (or beta) chain and a large (or alpha) chain by non-hydrolytic self-catalysis. Pyruvate is required as a cofactor.

The catalysed reaction is L-histidine + H(+) = histamine + CO2. The polypeptide is Histidine decarboxylase proenzyme (hdc) (Clostridium perfringens (strain ATCC 13124 / DSM 756 / JCM 1290 / NCIMB 6125 / NCTC 8237 / Type A)).